The primary structure comprises 290 residues: Serine protease 27 (290 aa).

Residues 1–22 form the signal peptide; sequence MRRPAAVPLLLLLCFGSQRAKA. Positions 23–34 are cleaved as a propeptide — activation peptide; the sequence is ATACGRPRMLNR. The 243-residue stretch at 35 to 277 folds into the Peptidase S1 domain; the sequence is MVGGQDTQEG…HHNWIHRIIP (243 aa). The N-linked (GlcNAc...) asparagine glycan is linked to asparagine 55. Cysteine 60 and cysteine 76 are disulfide-bonded. Histidine 75 (charge relay system) is an active-site residue. Asparagine 79 is a glycosylation site (N-linked (GlcNAc...) asparagine). Aspartate 124 functions as the Charge relay system in the catalytic mechanism. Cystine bridges form between cysteine 158–cysteine 235, cysteine 191–cysteine 214, and cysteine 225–cysteine 253. Serine 229 acts as the Charge relay system in catalysis.

It belongs to the peptidase S1 family. N-glycosylated. In terms of tissue distribution, expressed predominantly in the pancreas.

Its subcellular location is the secreted. In Homo sapiens (Human), this protein is Serine protease 27 (PRSS27).